The primary structure comprises 132 residues: Small ribosomal subunit protein uS8c (132 aa).

Belongs to the universal ribosomal protein uS8 family. As to quaternary structure, part of the 30S ribosomal subunit.

It is found in the plastid. The protein localises to the chloroplast. One of the primary rRNA binding proteins, it binds directly to 16S rRNA central domain where it helps coordinate assembly of the platform of the 30S subunit. This chain is Small ribosomal subunit protein uS8c (rps8), found in Thalassiosira pseudonana (Marine diatom).